The following is a 496-amino-acid chain: MMSKLQIIQSKGQYINGEWIKGNGLILESTNPASGTLLWQGNNATDEEIANACYVAHRALKSWANTSFEERARYTKAFVEQVEKNREQLARLISLETGKPLWESQTEVSSVIGKVNLSIQAYQERTWPKQTETAEANACLRFKPHGIVVVLGAFNFPAHLSNGHIVPALLAGNTVLYKPSEHTPAVAELIIQCWHDSGLPPGVINCLQGNANCGNTLLSQDIQGVYFTGSYATGLRIHQQFCNRPEVILALEMGGNNPLVIDEVKDIDAAVYHTILSTMITAGQRCTCARRIIIPDSQTGDLFLERFAKACKLMRIGSFDSQPEPFIGPVISHVQALKHLHAQKQLIEMGGEIILPMSLLLEYTGLVSPGIIDMTRAKNPPDEEIFAPFAQIYRYNHFDEAIQLANQTRYGLSAGLLSDNKDHYQQFYQNIRAGLINWNRPTTGAASSLPFGGVGCSGNHRPSAYFAADYCAYPVASMEQPLLTTPVQRLPGLVLE.

229-234 (GSYATG) provides a ligand contact to NAD(+). Residues Glu252 and Cys286 contribute to the active site.

It belongs to the aldehyde dehydrogenase family. AstD subfamily.

It catalyses the reaction N-succinyl-L-glutamate 5-semialdehyde + NAD(+) + H2O = N-succinyl-L-glutamate + NADH + 2 H(+). It functions in the pathway amino-acid degradation; L-arginine degradation via AST pathway; L-glutamate and succinate from L-arginine: step 4/5. Functionally, catalyzes the NAD-dependent reduction of succinylglutamate semialdehyde into succinylglutamate. This Legionella pneumophila subsp. pneumophila (strain Philadelphia 1 / ATCC 33152 / DSM 7513) protein is N-succinylglutamate 5-semialdehyde dehydrogenase.